The primary structure comprises 406 residues: MKFVDEVSIHVKAGDGGNGLMSFRREKFIEKGGPNGGDGGDGGSIYLEADVNLNTLVDYRYTRRFDAQRGENGGSKDCTGAKGDDLILPVPVGTTVIDANTQEIIGDLTEPGQRLMVAQGGWHGLGNTRFKSSTNRAPRQTTPGKPGEARDLKLELKVLADVGLLGLPNAGKSTFIRAVSAAKPKVADYPFTTLVPNLGVVSVGRYKSFVVADIPGLIEGAAEGAGLGIRFLKHLARTRILLHLVDMAPLDESDPADAAEVIVRELGRFSPALTERERWLVLNKMDQILDPAEREARKQAVIERLGWEGPVYVISALERDGTEALSQDIMRYLDERTLRLEEDPQYAEELAELDRRIEDEARARLQALDDARALRRSGLKNAGAVDDDDFDDEEDDGDGPEIFYVP.

One can recognise an Obg domain in the interval 1-159 (MKFVDEVSIH…RDLKLELKVL (159 aa)). The disordered stretch occupies residues 127–148 (NTRFKSSTNRAPRQTTPGKPGE). Positions 129–143 (RFKSSTNRAPRQTTP) are enriched in polar residues. Residues 160-334 (ADVGLLGLPN…LSQDIMRYLD (175 aa)) form the OBG-type G domain. GTP-binding positions include 166–173 (GLPNAGKS), 191–195 (FTTLV), 213–216 (DIPG), 283–286 (NKMD), and 315–317 (SAL). Mg(2+) contacts are provided by serine 173 and threonine 193. Residues 382–406 (AGAVDDDDFDDEEDDGDGPEIFYVP) are disordered. The segment covering 385 to 399 (VDDDDFDDEEDDGDG) has biased composition (acidic residues).

The protein belongs to the TRAFAC class OBG-HflX-like GTPase superfamily. OBG GTPase family. Monomer. Requires Mg(2+) as cofactor.

It is found in the cytoplasm. In terms of biological role, an essential GTPase which binds GTP, GDP and possibly (p)ppGpp with moderate affinity, with high nucleotide exchange rates and a fairly low GTP hydrolysis rate. Plays a role in control of the cell cycle, stress response, ribosome biogenesis and in those bacteria that undergo differentiation, in morphogenesis control. This chain is GTPase Obg, found in Pseudomonas aeruginosa (strain LESB58).